A 201-amino-acid chain; its full sequence is MAWMLLLILIMVHPGSCALWVSQPPEIRTLEGSSAFLPCSFNASQGRLAIGSVTWFRDEVVPGKEVRNGTPEFRGRLAPLASSRFLHDHQAELHIRDVRGHDASIYVCRVEVLGLGVGTGNGTRLVVEKEHPQLGAGTVLLLRAGFYAVSFLSVAVGSTVYYQGKCLTWKGPRRQLPAVVPAPLPPPCGSSAHLLPPVPGG.

The first 18 residues, 1–18, serve as a signal peptide directing secretion; it reads MAWMLLLILIMVHPGSCA. Residues 19–126 form the Ig-like domain; the sequence is LWVSQPPEIR…VGTGNGTRLV (108 aa). At 19–135 the chain is on the extracellular side; sequence LWVSQPPEIR…VVEKEHPQLG (117 aa). Cysteine 39 and cysteine 108 form a disulfide bridge. Residues asparagine 42 and asparagine 121 are each glycosylated (N-linked (GlcNAc...) asparagine). The chain crosses the membrane as a helical span at residues 136-156; the sequence is AGTVLLLRAGFYAVSFLSVAV. The Cytoplasmic segment spans residues 157 to 201; it reads GSTVYYQGKCLTWKGPRRQLPAVVPAPLPPPCGSSAHLLPPVPGG.

The protein belongs to the natural cytotoxicity receptor (NCR) family. Homodimer in the unliganted form. Interacts with CD3Z. Interacts with and is activated by binding to NCR3LG1. Interacts with and is activated by binding to BAG6. Interacts with and is inhibited by binding to LGALS3. As to expression, selectively expressed by all resting and activated NK cells and weakly expressed in spleen.

The protein localises to the cell membrane. In terms of biological role, cell membrane receptor of natural killer/NK cells that is activated by binding of extracellular ligands including BAG6 and NCR3LG1. Stimulates NK cells cytotoxicity toward neighboring cells producing these ligands. It controls, for instance, NK cells cytotoxicity against tumor cells. Engagement of NCR3 by BAG6 also promotes myeloid dendritic cells (DC) maturation, both through killing DCs that did not acquire a mature phenotype, and inducing the release by NK cells of TNFA and IFNG which promote DC maturation. The chain is Natural cytotoxicity triggering receptor 3 from Homo sapiens (Human).